Here is a 404-residue protein sequence, read N- to C-terminus: Probable tRNA sulfurtransferase (404 aa).

One can recognise a THUMP domain in the interval 60 to 165; it reads QPVAESLKQI…EEAAYISYET (106 aa). Residues 183–184, 208–209, Arg265, Gly287, and Gln296 each bind ATP; these read ML and HF.

It belongs to the ThiI family.

It is found in the cytoplasm. The catalysed reaction is [ThiI sulfur-carrier protein]-S-sulfanyl-L-cysteine + a uridine in tRNA + 2 reduced [2Fe-2S]-[ferredoxin] + ATP + H(+) = [ThiI sulfur-carrier protein]-L-cysteine + a 4-thiouridine in tRNA + 2 oxidized [2Fe-2S]-[ferredoxin] + AMP + diphosphate. It catalyses the reaction [ThiS sulfur-carrier protein]-C-terminal Gly-Gly-AMP + S-sulfanyl-L-cysteinyl-[cysteine desulfurase] + AH2 = [ThiS sulfur-carrier protein]-C-terminal-Gly-aminoethanethioate + L-cysteinyl-[cysteine desulfurase] + A + AMP + 2 H(+). It functions in the pathway cofactor biosynthesis; thiamine diphosphate biosynthesis. Functionally, catalyzes the ATP-dependent transfer of a sulfur to tRNA to produce 4-thiouridine in position 8 of tRNAs, which functions as a near-UV photosensor. Also catalyzes the transfer of sulfur to the sulfur carrier protein ThiS, forming ThiS-thiocarboxylate. This is a step in the synthesis of thiazole, in the thiamine biosynthesis pathway. The sulfur is donated as persulfide by IscS. This Streptococcus sanguinis (strain SK36) protein is Probable tRNA sulfurtransferase.